The sequence spans 284 residues: tRNA-cytidine(32) 2-sulfurtransferase (284 aa).

The PP-loop motif motif lies at 45 to 50 (SGGKDS). Residues C120, C123, and C211 each contribute to the [4Fe-4S] cluster site.

This sequence belongs to the TtcA family. In terms of assembly, homodimer. It depends on Mg(2+) as a cofactor. The cofactor is [4Fe-4S] cluster.

The protein localises to the cytoplasm. It catalyses the reaction cytidine(32) in tRNA + S-sulfanyl-L-cysteinyl-[cysteine desulfurase] + AH2 + ATP = 2-thiocytidine(32) in tRNA + L-cysteinyl-[cysteine desulfurase] + A + AMP + diphosphate + H(+). Its pathway is tRNA modification. Functionally, catalyzes the ATP-dependent 2-thiolation of cytidine in position 32 of tRNA, to form 2-thiocytidine (s(2)C32). The sulfur atoms are provided by the cysteine/cysteine desulfurase (IscS) system. The protein is tRNA-cytidine(32) 2-sulfurtransferase of Alcanivorax borkumensis (strain ATCC 700651 / DSM 11573 / NCIMB 13689 / SK2).